The primary structure comprises 472 residues: 3-isopropylmalate dehydratase large subunit (472 aa).

The [4Fe-4S] cluster site is built by cysteine 347, cysteine 409, and cysteine 412.

It belongs to the aconitase/IPM isomerase family. LeuC type 1 subfamily. Heterodimer of LeuC and LeuD. It depends on [4Fe-4S] cluster as a cofactor.

It carries out the reaction (2R,3S)-3-isopropylmalate = (2S)-2-isopropylmalate. It participates in amino-acid biosynthesis; L-leucine biosynthesis; L-leucine from 3-methyl-2-oxobutanoate: step 2/4. In terms of biological role, catalyzes the isomerization between 2-isopropylmalate and 3-isopropylmalate, via the formation of 2-isopropylmaleate. This Salinibacter ruber (strain DSM 13855 / M31) protein is 3-isopropylmalate dehydratase large subunit.